A 400-amino-acid polypeptide reads, in one-letter code: Large envelope protein (400 aa).

Met1 carries the N-acetylmethionine modification. The N-myristoyl glycine; by host moiety is linked to residue Gly2. Residues 2–119 (GGWSSKHRKG…PPLRDTHPQA (118 aa)) form a pre-S1 region. The pre-S stretch occupies residues 2 to 174 (GGWSSKHRKG…FTKTGDPASN (173 aa)). Topologically, residues 2–181 (GGWSSKHRKG…ASNMESTTSG (180 aa)) are virion surface; in external conformation. Residues 2-253 (GGWSSKHRKG…PGYRWMCLRR (252 aa)) lie on the Intravirion; in internal conformation side of the membrane. Trp4 carries an N-linked (GlcNAc...) asparagine glycan. Positions 89 to 117 (PAAPPPASTNRQSGRQPTPISPPLRDTHP) are disordered. Over residues 96-106 (STNRQSGRQPT) the composition is skewed to polar residues. The pre-S2 stretch occupies residues 120-174 (MQWNSTAFHQALQDPRVRGLYFPAGGSSSGTVNPVPNTVSHISSIFTKTGDPASN). The chain crosses the membrane as a helical span at residues 182 to 202 (FLGPLLVLQAGFFLLTRILTI). The Intravirion; in external conformation segment spans residues 203-253 (PQSLDSWWTSLNFLGGAPGCIGQNSQSQTSNHSPTSCPPTCPGYRWMCLRR). The helical transmembrane segment at 254–274 (FIIFLFILLLCLIFLLVLLDY) threads the bilayer. The Virion surface portion of the chain corresponds to 275-348 (QGMLPVCPLL…WASVRFSWLS (74 aa)). The N-linked (GlcNAc...) asparagine; by host glycan is linked to Asn320. A helical transmembrane segment spans residues 349 to 369 (LLVPFVQWFAGLSPTVWLSVI). The Intravirion portion of the chain corresponds to 370–375 (WMIWYW). The helical transmembrane segment at 376–398 (GPSLYNILSPFLPLLPIFLCLWV) threads the bilayer. Residues 399–400 (YI) are Virion surface-facing.

It belongs to the orthohepadnavirus major surface antigen family. As to quaternary structure, in its internal form (Li-HBsAg), interacts with the capsid protein and with the isoform S. Interacts with host chaperone CANX. In terms of assembly, associates with host chaperone CANX through its pre-S2 N glycan; this association may be essential for isoform M proper secretion. Interacts with isoform L. Interacts with the antigens of satellite virus HDV (HDVAgs); this interaction is required for encapsidation of HDV genomic RNA. In terms of processing, isoform M is N-terminally acetylated by host at a ratio of 90%, and N-glycosylated by host at the pre-S2 region. Myristoylated.

The protein resides in the virion membrane. In terms of biological role, the large envelope protein exists in two topological conformations, one which is termed 'external' or Le-HBsAg and the other 'internal' or Li-HBsAg. In its external conformation the protein attaches the virus to cell receptors and thereby initiating infection. This interaction determines the species specificity and liver tropism. This attachment induces virion internalization predominantly through caveolin-mediated endocytosis. The large envelope protein also assures fusion between virion membrane and endosomal membrane. In its internal conformation the protein plays a role in virion morphogenesis and mediates the contact with the nucleocapsid like a matrix protein. The middle envelope protein plays an important role in the budding of the virion. It is involved in the induction of budding in a nucleocapsid independent way. In this process the majority of envelope proteins bud to form subviral lipoprotein particles of 22 nm of diameter that do not contain a nucleocapsid. This chain is Large envelope protein, found in Homo sapiens (Human).